Here is a 22-residue protein sequence, read N- to C-terminus: Cysteine-rich venom protein collettin-a (22 aa).

A compositionally biased stretch (basic and acidic residues) spans 1–15 (SNKKNYQKEIVDKHN). The tract at residues 1–22 (SNKKNYQKEIVDKHNALRRSVK) is disordered.

The protein belongs to the CRISP family. In terms of processing, contains 8 disulfide bonds. In terms of tissue distribution, expressed by the venom gland.

It localises to the secreted. In Pseudechis colletti (Collett's snake), this protein is Cysteine-rich venom protein collettin-a.